The sequence spans 657 residues: Probable potassium transport system protein Kup (657 aa).

12 helical membrane-spanning segments follow: residues 14–34 (IGGL…SPLY), 47–67 (ADIV…QTTI), 96–116 (IQWL…DGII), 140–160 (TIVY…QFGT), 166–186 (FFAP…FIQI), 201–221 (AYHL…VFLC), 242–262 (ISWI…AAYL), 283–303 (LIMP…AAVI), 340–360 (LYIP…VLHF), 371–391 (GLAI…YLIM), 396–416 (LYFM…FLIA), and 425–445 (GYVT…WYLA).

The protein belongs to the HAK/KUP transporter (TC 2.A.72) family.

The protein localises to the cell inner membrane. The catalysed reaction is K(+)(in) + H(+)(in) = K(+)(out) + H(+)(out). In terms of biological role, transport of potassium into the cell. Likely operates as a K(+):H(+) symporter. The chain is Probable potassium transport system protein Kup from Flavobacterium johnsoniae (strain ATCC 17061 / DSM 2064 / JCM 8514 / BCRC 14874 / CCUG 350202 / NBRC 14942 / NCIMB 11054 / UW101) (Cytophaga johnsonae).